We begin with the raw amino-acid sequence, 690 residues long: Elongation factor G (690 aa).

One can recognise a tr-type G domain in the interval 8–283 (EKYRNIGIMA…AVVDYLPSPL (276 aa)). GTP is bound by residues 17–24 (AHIDAGKT), 81–85 (DTPGH), and 135–138 (NKLD).

It belongs to the TRAFAC class translation factor GTPase superfamily. Classic translation factor GTPase family. EF-G/EF-2 subfamily.

Its subcellular location is the cytoplasm. Catalyzes the GTP-dependent ribosomal translocation step during translation elongation. During this step, the ribosome changes from the pre-translocational (PRE) to the post-translocational (POST) state as the newly formed A-site-bound peptidyl-tRNA and P-site-bound deacylated tRNA move to the P and E sites, respectively. Catalyzes the coordinated movement of the two tRNA molecules, the mRNA and conformational changes in the ribosome. This chain is Elongation factor G, found in Rhizorhabdus wittichii (strain DSM 6014 / CCUG 31198 / JCM 15750 / NBRC 105917 / EY 4224 / RW1) (Sphingomonas wittichii).